Reading from the N-terminus, the 430-residue chain is Trigger factor (430 aa).

The region spanning 163-248 is the PPIase FKBP-type domain; sequence GNIAIIDFKG…VKEIKVKEIP (86 aa).

It belongs to the FKBP-type PPIase family. Tig subfamily.

The protein resides in the cytoplasm. It catalyses the reaction [protein]-peptidylproline (omega=180) = [protein]-peptidylproline (omega=0). Involved in protein export. Acts as a chaperone by maintaining the newly synthesized protein in an open conformation. Functions as a peptidyl-prolyl cis-trans isomerase. This Clostridium kluyveri (strain NBRC 12016) protein is Trigger factor.